The following is a 612-amino-acid chain: UvrABC system protein C (612 aa).

In terms of domain architecture, GIY-YIG spans 20–98 (THSGVYRMLD…IKQHRPKYNI (79 aa)). The 36-residue stretch at 208-243 (SSVLEEISAKMYQASEDMEYEKAQVYRDQLVVLRKL) folds into the UVR domain.

It belongs to the UvrC family. Interacts with UvrB in an incision complex.

Its subcellular location is the cytoplasm. Its function is as follows. The UvrABC repair system catalyzes the recognition and processing of DNA lesions. UvrC both incises the 5' and 3' sides of the lesion. The N-terminal half is responsible for the 3' incision and the C-terminal half is responsible for the 5' incision. The sequence is that of UvrABC system protein C from Francisella tularensis subsp. holarctica (strain FTNF002-00 / FTA).